A 65-amino-acid chain; its full sequence is Ferredoxin soy (65 aa).

In terms of domain architecture, 4Fe-4S ferredoxin-type spans 2 to 29 (GVQVDKERCVGAGMCALTAPDVFTQDDD). Residues cysteine 10, cysteine 16, and cysteine 55 each coordinate [3Fe-4S] cluster.

Requires [3Fe-4S] cluster as cofactor.

Functionally, electron transport protein for the cytochrome P-450-SOY system. This chain is Ferredoxin soy (soyB), found in Streptomyces griseus.